The sequence spans 2179 residues: Voltage-dependent L-type calcium channel subunit alpha-1D (2179 aa).

Disordered stretches follow at residues methionine 1–alanine 21, threonine 30–threonine 49, and lysine 64–serine 100. Residues methionine 1–lysine 126 lie on the Cytoplasmic side of the membrane. Polar residues predominate over residues glycine 38–threonine 49. The segment covering glutamine 82–lysine 93 has biased composition (basic residues). One copy of the I repeat lies at asparagine 113–phenylalanine 409. Residues proline 127–isoleucine 145 form a helical membrane-spanning segment. The Extracellular segment spans residues tyrosine 146–lysine 163. Residues valine 164–tyrosine 183 form a helical membrane-spanning segment. Residues glycine 184 to asparagine 195 are Cytoplasmic-facing. The helical transmembrane segment at glycine 196 to leucine 214 threads the bilayer. Topologically, residues glutamate 215 to aspartate 235 are extracellular. The chain crosses the membrane as a helical span at residues valine 236–valine 254. Over proline 255–histidine 273 the chain is Cytoplasmic. The chain crosses the membrane as a helical span at residues isoleucine 274–phenylalanine 293. Residues isoleucine 294–tryptophan 381 lie on the Extracellular side of the membrane. Ca(2+) is bound at residue glutamate 364. Residues proline 382–serine 406 form a helical membrane-spanning segment. The Cytoplasmic segment spans residues glycine 407–valine 543. Residues glutamine 429–glutamate 446 form a binding to the beta subunit region. Residues aspartate 449–serine 480 are disordered. A compositionally biased stretch (polar residues) spans asparagine 463–valine 479. The II repeat unit spans residues asparagine 529 to leucine 775. Residues threonine 544–glutamate 563 form a helical membrane-spanning segment. The Extracellular portion of the chain corresponds to histidine 564 to alanine 578. A helical membrane pass occupies residues asparagine 579–leucine 597. Residues glycine 598–serine 605 lie on the Cytoplasmic side of the membrane. A helical transmembrane segment spans residues leucine 606–leucine 624. The Extracellular segment spans residues valine 625 to glycine 634. A helical transmembrane segment spans residues valine 635–tryptophan 653. Residues threonine 654 to serine 672 are Cytoplasmic-facing. A helical membrane pass occupies residues leucine 673 to glycine 693. The Extracellular portion of the chain corresponds to glycine 694–isoleucine 747. Ca(2+) is bound at residue glutamate 725. The chain crosses the membrane as a helical span at residues valine 748–valine 772. The stretch at alanine 771 to lysine 810 forms a coiled coil. The Cytoplasmic segment spans residues aspartate 773–histidine 906. Over residues lysine 786–lysine 810 the composition is skewed to basic and acidic residues. Residues lysine 786 to glutamate 870 are disordered. A compositionally biased stretch (polar residues) spans proline 811–lysine 822. A compositionally biased stretch (acidic residues) spans valine 845 to glutamate 858. One copy of the III repeat lies at asparagine 893 to phenylalanine 1175. A helical membrane pass occupies residues isoleucine 907–alanine 925. Residues glutamate 926 to tyrosine 941 are Extracellular-facing. The helical transmembrane segment at phenylalanine 942 to phenylalanine 961 threads the bilayer. The Cytoplasmic portion of the chain corresponds to glycine 962–asparagine 973. A helical membrane pass occupies residues tyrosine 974–isoleucine 992. At glutamine 993–serine 998 the chain is on the extracellular side. Residues valine 999–alanine 1018 traverse the membrane as a helical segment. Topologically, residues lysine 1019–asparagine 1037 are cytoplasmic. Residues isoleucine 1038–phenylalanine 1057 form a helical membrane-spanning segment. Residues lysine 1058–glutamate 1147 lie on the Extracellular side of the membrane. The interval arginine 1095 to asparagine 1185 is dihydropyridine binding. Residue glutamate 1121 coordinates Ca(2+). A helical transmembrane segment spans residues isoleucine 1148–valine 1168. Over glycine 1169–serine 1225 the chain is Cytoplasmic. The stretch at asparagine 1212 to phenylalanine 1487 is one IV repeat. A helical transmembrane segment spans residues proline 1226 to methionine 1244. Residues glutamine 1245 to isoleucine 1259 are Extracellular-facing. The helical transmembrane segment at leucine 1260–phenylalanine 1279 threads the bilayer. Residues lysine 1280–serine 1286 are Cytoplasmic-facing. The chain crosses the membrane as a helical span at residues aspartate 1287–glutamate 1308. Residues alanine 1309–isoleucine 1333 lie on the Extracellular side of the membrane. Residues serine 1334–glycine 1353 form a helical membrane-spanning segment. Residues glutamate 1354–tyrosine 1372 are Cytoplasmic-facing. The chain crosses the membrane as a helical span at residues valine 1373–phenylalanine 1392. Residues glycine 1393 to phenylalanine 1459 lie on the Extracellular side of the membrane. Residues leucine 1440 to lysine 1506 form a dihydropyridine binding region. The segment at glutamate 1452 to serine 1495 is phenylalkylamine binding. A helical transmembrane segment spans residues alanine 1460–methionine 1484. The Cytoplasmic segment spans residues aspartate 1485–leucine 2179. Disordered regions lie at residues leucine 1704–lysine 1789, phenylalanine 1896–phenylalanine 1941, and glycine 2135–aspartate 2171. The segment covering serine 1764–methionine 1782 has biased composition (polar residues). Residues serine 2156–aspartate 2171 show a composition bias toward acidic residues.

It belongs to the calcium channel alpha-1 subunit (TC 1.A.1.11) family. CACNA1D subfamily. In terms of assembly, voltage-dependent calcium channels are multisubunit complexes, consisting of alpha-1, alpha-2, beta and delta subunits in a 1:1:1:1 ratio. The channel activity is directed by the pore-forming and voltage-sensitive alpha-1 subunit. In many cases, this subunit is sufficient to generate voltage-sensitive calcium channel activity. The auxiliary subunits beta and alpha-2/delta linked by a disulfide bridge regulate the channel activity. Interacts (via IQ domain) with CABP1 and CABP4 in a calcium independent manner. Interacts with RIMBP2. In terms of tissue distribution, expressed in the inner hair cells (IHC) of the cochlea.

The protein resides in the membrane. The enzyme catalyses Ca(2+)(in) = Ca(2+)(out). In terms of biological role, voltage-sensitive calcium channels (VSCC) mediate the entry of calcium ions into excitable cells and are also involved in a variety of calcium-dependent processes, including muscle contraction, hormone or neurotransmitter release, gene expression, cell motility, cell division and cell death. The isoform alpha-1D gives rise to L-type calcium currents. Long-lasting (L-type) calcium channels belong to the 'high-voltage activated' (HVA) group. They are blocked by dihydropyridines (DHP), phenylalkylamines, and by benzothiazepines. The polypeptide is Voltage-dependent L-type calcium channel subunit alpha-1D (Cacna1d) (Mus musculus (Mouse)).